The primary structure comprises 360 residues: UDP-N-acetylglucosamine--N-acetylmuramyl-(pentapeptide) pyrophosphoryl-undecaprenol N-acetylglucosamine transferase (360 aa).

UDP-N-acetyl-alpha-D-glucosamine contacts are provided by serine 198 and glutamine 289.

Belongs to the glycosyltransferase 28 family. MurG subfamily.

The protein resides in the cell membrane. It catalyses the reaction Mur2Ac(oyl-L-Ala-gamma-D-Glu-L-Lys-D-Ala-D-Ala)-di-trans,octa-cis-undecaprenyl diphosphate + UDP-N-acetyl-alpha-D-glucosamine = beta-D-GlcNAc-(1-&gt;4)-Mur2Ac(oyl-L-Ala-gamma-D-Glu-L-Lys-D-Ala-D-Ala)-di-trans,octa-cis-undecaprenyl diphosphate + UDP + H(+). The protein operates within cell wall biogenesis; peptidoglycan biosynthesis. Functionally, cell wall formation. Catalyzes the transfer of a GlcNAc subunit on undecaprenyl-pyrophosphoryl-MurNAc-pentapeptide (lipid intermediate I) to form undecaprenyl-pyrophosphoryl-MurNAc-(pentapeptide)GlcNAc (lipid intermediate II). This Streptococcus pyogenes serotype M4 (strain MGAS10750) protein is UDP-N-acetylglucosamine--N-acetylmuramyl-(pentapeptide) pyrophosphoryl-undecaprenol N-acetylglucosamine transferase.